The chain runs to 98 residues: Aspartyl/glutamyl-tRNA(Asn/Gln) amidotransferase subunit C (98 aa).

This sequence belongs to the GatC family. Heterotrimer of A, B and C subunits.

It catalyses the reaction L-glutamyl-tRNA(Gln) + L-glutamine + ATP + H2O = L-glutaminyl-tRNA(Gln) + L-glutamate + ADP + phosphate + H(+). It carries out the reaction L-aspartyl-tRNA(Asn) + L-glutamine + ATP + H2O = L-asparaginyl-tRNA(Asn) + L-glutamate + ADP + phosphate + 2 H(+). In terms of biological role, allows the formation of correctly charged Asn-tRNA(Asn) or Gln-tRNA(Gln) through the transamidation of misacylated Asp-tRNA(Asn) or Glu-tRNA(Gln) in organisms which lack either or both of asparaginyl-tRNA or glutaminyl-tRNA synthetases. The reaction takes place in the presence of glutamine and ATP through an activated phospho-Asp-tRNA(Asn) or phospho-Glu-tRNA(Gln). The sequence is that of Aspartyl/glutamyl-tRNA(Asn/Gln) amidotransferase subunit C from Beutenbergia cavernae (strain ATCC BAA-8 / DSM 12333 / CCUG 43141 / JCM 11478 / NBRC 16432 / NCIMB 13614 / HKI 0122).